The following is a 184-amino-acid chain: Interferon alpha-2 (184 aa).

Positions 1–23 (MALPFSLLMALVVLSCHSSCSLG) are cleaved as a signal peptide. Cystine bridges form between Cys-24–Cys-122 and Cys-52–Cys-162.

This sequence belongs to the alpha/beta interferon family. As to quaternary structure, interacts with IFNAR2.

The protein resides in the secreted. Its function is as follows. Produced by macrophages, IFN-alpha have antiviral activities. The protein is Interferon alpha-2 of Equus caballus (Horse).